The sequence spans 131 residues: Small ribosomal subunit protein uS8 (131 aa).

This sequence belongs to the universal ribosomal protein uS8 family. In terms of assembly, part of the 30S ribosomal subunit. Contacts proteins S5 and S12.

Its function is as follows. One of the primary rRNA binding proteins, it binds directly to 16S rRNA central domain where it helps coordinate assembly of the platform of the 30S subunit. The chain is Small ribosomal subunit protein uS8 from Thiobacillus denitrificans (strain ATCC 25259 / T1).